A 284-amino-acid polypeptide reads, in one-letter code: Large ribosomal subunit protein uL2 (284 aa).

The disordered stretch occupies residues 232-284 (RGTAMNPVDHPHGGGEGRHNGYIPRTPWGKVTKGLKTRDKRKSNKWIVKDRRK). A compositionally biased stretch (basic and acidic residues) spans 240–250 (DHPHGGGEGRH). A compositionally biased stretch (basic residues) spans 264–284 (KGLKTRDKRKSNKWIVKDRRK).

The protein belongs to the universal ribosomal protein uL2 family. As to quaternary structure, part of the 50S ribosomal subunit. Forms a bridge to the 30S subunit in the 70S ribosome.

One of the primary rRNA binding proteins. Required for association of the 30S and 50S subunits to form the 70S ribosome, for tRNA binding and peptide bond formation. It has been suggested to have peptidyltransferase activity; this is somewhat controversial. Makes several contacts with the 16S rRNA in the 70S ribosome. In Chlamydia felis (strain Fe/C-56) (Chlamydophila felis), this protein is Large ribosomal subunit protein uL2.